Reading from the N-terminus, the 777-residue chain is Nuclear autoantigenic sperm protein (777 aa).

Ala-2 is subject to N-acetylalanine. Position 34 is an N6-acetyllysine (Lys-34). The stretch at 44–77 (AKKLLGLGQKHLVMGDIPAAVNAFQEAASLLGKK) is one TPR 1 repeat. The interval 117–128 (EEEEGEKTEEES) is histone-binding. Thr-124 bears the Phosphothreonine mark. Ser-128 is modified (phosphoserine). Composition is skewed to basic and acidic residues over residues 152–186 (MGEK…REDM), 227–259 (VTSK…EKGG), and 267–276 (IEEKPKEASK). Positions 152–496 (MGEKEAQKTE…ALENKSLQEN (345 aa)) are disordered. Residues 211-244 (EEGKGAAAPEGLSEAEVTSKKPDQEIPGAEEGKS) are histone-binding. Lys-243 is subject to N6-acetyllysine. A Phosphoserine modification is found at Ser-244. An N6-acetyllysine modification is found at Lys-285. Residues 303 to 319 (DEPKEQVAASESERGKA) are compositionally biased toward basic and acidic residues. Ser-312 is subject to Phosphoserine. Low complexity predominate over residues 342-353 (AADASAAEAGSE). Phosphoserine occurs at positions 399, 411, and 440. The segment at 458 to 501 (EQMKEGEETEGSEEEDKENDKAEETLNDSALENKSLQENEEEEI) is histone-binding. A compositionally biased stretch (acidic residues) spans 464–474 (EETEGSEEEDK). Thr-466 is subject to Phosphothreonine. Phosphoserine is present on residues Ser-469, Ser-486, and Ser-492. The segment covering 484–493 (NDSALENKSL) has biased composition (polar residues). TPR repeat units follow at residues 531 to 564 (AQAH…QEQY) and 573 to 606 (AETH…IEKR). Residues 593–648 (VAQFSKSIEVIEKRMAVLNEQMKEAEGSPTEYEKEIEELKELLPEIREKIEDAKES) are a coiled coil. Ser-651 is subject to Phosphoserine. A compositionally biased stretch (low complexity) spans 667-681 (STSGFTPSGGSSSVS). Residues 667–777 (STSGFTPSGG…AGATVESTAC (111 aa)) are disordered. Thr-672 carries the post-translational modification Phosphothreonine. Phosphoserine is present on residues Ser-694 and Ser-695. The Nuclear localization signal signature appears at 705 to 711 (VRKKRKP). A compositionally biased stretch (basic and acidic residues) spans 710–728 (KPEEESPRKDDAKKAKQEP). At Ser-715 the chain carries Phosphoserine. A Glycyl lysine isopeptide (Lys-Gly) (interchain with G-Cter in SUMO1) cross-link involves residue Lys-725. At Ser-734 the chain carries Phosphoserine.

This sequence belongs to the NASP family. In terms of assembly, binds to linker H1 histones. Interacts with histones H2A, H2B, H3 and H4. Interacts with histone H3.3. Interacts with histones H3 and H4; NASP is a histone chaperone that stabilizes and maintains a soluble pool of histone H3-H4 dimers. Interacts with ASF1A and ASF1B; the interaction is probably indirect and mediated by H3-H4. Also binds to HSP90 in the cytoplasm. This interaction stimulates binding of NASP to H1-6/H1T.

It localises to the cytoplasm. It is found in the nucleus. Component of the histone chaperone network. Binds and stabilizes histone H3-H4 not bound to chromatin to maintain a soluble reservoir and modulate degradation by chaperone-mediated autophagy. Required for DNA replication, normal cell cycle progression and cell proliferation. Forms a cytoplasmic complex with HSP90 and H1 linker histones and stimulates HSP90 ATPase activity. NASP and H1 histone are subsequently released from the complex and translocate to the nucleus where the histone is released for binding to DNA. The polypeptide is Nuclear autoantigenic sperm protein (Bos taurus (Bovine)).